We begin with the raw amino-acid sequence, 310 residues long: p-hydroxybenzoic acid efflux pump subunit AaeA (310 aa).

The helical transmembrane segment at 12 to 32 threads the bilayer; the sequence is AITVILVILAFVAIFRAWVYY.

Belongs to the membrane fusion protein (MFP) (TC 8.A.1) family.

It is found in the cell inner membrane. Forms an efflux pump with AaeB. The sequence is that of p-hydroxybenzoic acid efflux pump subunit AaeA from Klebsiella pneumoniae (strain 342).